A 1887-amino-acid polypeptide reads, in one-letter code: Nuclear pore membrane glycoprotein 210 (1887 aa).

Positions 1–26 are cleaved as a signal peptide; sequence MAARGRGLLLLTLSVLLAAGPSAAAA. Residues 27-1808 lie on the Perinuclear space side of the membrane; it reads KLNIPKVLLP…LFQHFLDSYQ (1782 aa). N-linked (GlcNAc...) asparagine glycans are attached at residues N44, N337, N405, N484, N681, N801, N926, N1039, N1116, N1135, N1362, and N1441. One can recognise a BIG2 domain in the interval 1078-1151; it reads FPPFRLMPRK…VQAVDAETGK (74 aa). Residues 1809–1829 form a helical membrane-spanning segment; sequence VMFFTLFALLAGTAVMIIAYH. At 1830-1887 the chain is on the cytoplasmic side; the sequence is TVCTPRDLAVPAALTPRASPGHSPHYFAASSPTSPNALPPARKASPPSGLWSPAYASH. Phosphothreonine is present on T1844. The tract at residues 1853 to 1887 is disordered; the sequence is PHYFAASSPTSPNALPPARKASPPSGLWSPAYASH. 4 positions are modified to phosphoserine: S1874, S1877, S1881, and S1886.

It belongs to the NUP210 family. Forms dimers and possibly higher-order oligomers. In terms of processing, N-glycosylated, but not all potential glycosylation sites may be used. Contains high-mannose type oligosaccharides. Post-translationally, phosphorylated at Ser-1881 in mitosis specifically; not phosphorylated in interphase. In terms of tissue distribution, ubiquitous expression, with highest levels in lung, liver, pancreas, testis, and ovary, intermediate levels in brain, kidney, and spleen, and lowest levels in heart and skeletal muscle.

It is found in the nucleus. Its subcellular location is the nuclear pore complex. It localises to the nucleus membrane. The protein localises to the endoplasmic reticulum membrane. Functionally, nucleoporin essential for nuclear pore assembly and fusion, nuclear pore spacing, as well as structural integrity. In Homo sapiens (Human), this protein is Nuclear pore membrane glycoprotein 210 (NUP210).